Consider the following 301-residue polypeptide: Formylmethanofuran--tetrahydromethanopterin formyltransferase-like protein (301 aa).

The protein belongs to the FTR family.

This Archaeoglobus fulgidus (strain ATCC 49558 / DSM 4304 / JCM 9628 / NBRC 100126 / VC-16) protein is Formylmethanofuran--tetrahydromethanopterin formyltransferase-like protein.